A 193-amino-acid chain; its full sequence is Large ribosomal subunit protein uL18 (193 aa).

The protein belongs to the universal ribosomal protein uL18 family. As to quaternary structure, part of the 50S ribosomal subunit. Contacts the 5S and 23S rRNAs.

Its function is as follows. This is one of the proteins that bind and probably mediate the attachment of the 5S RNA into the large ribosomal subunit, where it forms part of the central protuberance. The polypeptide is Large ribosomal subunit protein uL18 (Methanococcus maripaludis (strain DSM 14266 / JCM 13030 / NBRC 101832 / S2 / LL)).